A 352-amino-acid polypeptide reads, in one-letter code: UDP-3-O-acylglucosamine N-acyltransferase (352 aa).

The active-site Proton acceptor is H246.

The protein belongs to the transferase hexapeptide repeat family. LpxD subfamily. As to quaternary structure, homotrimer.

It catalyses the reaction a UDP-3-O-[(3R)-3-hydroxyacyl]-alpha-D-glucosamine + a (3R)-hydroxyacyl-[ACP] = a UDP-2-N,3-O-bis[(3R)-3-hydroxyacyl]-alpha-D-glucosamine + holo-[ACP] + H(+). It participates in bacterial outer membrane biogenesis; LPS lipid A biosynthesis. In terms of biological role, catalyzes the N-acylation of UDP-3-O-acylglucosamine using 3-hydroxyacyl-ACP as the acyl donor. Is involved in the biosynthesis of lipid A, a phosphorylated glycolipid that anchors the lipopolysaccharide to the outer membrane of the cell. This chain is UDP-3-O-acylglucosamine N-acyltransferase, found in Chlorobium luteolum (strain DSM 273 / BCRC 81028 / 2530) (Pelodictyon luteolum).